We begin with the raw amino-acid sequence, 188 residues long: ATP synthase subunit b (188 aa).

Residues 30–50 (IVWSLIPFLIILIVFWKLVLP) form a helical membrane-spanning segment.

This sequence belongs to the ATPase B chain family. As to quaternary structure, F-type ATPases have 2 components, F(1) - the catalytic core - and F(0) - the membrane proton channel. F(1) has five subunits: alpha(3), beta(3), gamma(1), delta(1), epsilon(1). F(0) has three main subunits: a(1), b(2) and c(10-14). The alpha and beta chains form an alternating ring which encloses part of the gamma chain. F(1) is attached to F(0) by a central stalk formed by the gamma and epsilon chains, while a peripheral stalk is formed by the delta and b chains.

It is found in the cell membrane. In terms of biological role, f(1)F(0) ATP synthase produces ATP from ADP in the presence of a proton or sodium gradient. F-type ATPases consist of two structural domains, F(1) containing the extramembraneous catalytic core and F(0) containing the membrane proton channel, linked together by a central stalk and a peripheral stalk. During catalysis, ATP synthesis in the catalytic domain of F(1) is coupled via a rotary mechanism of the central stalk subunits to proton translocation. Functionally, component of the F(0) channel, it forms part of the peripheral stalk, linking F(1) to F(0). This Corynebacterium glutamicum (strain R) protein is ATP synthase subunit b.